Reading from the N-terminus, the 536-residue chain is Quinate permease (536 aa).

The Cytoplasmic portion of the chain corresponds to 1-26 (MTLLALKEDRPTPKAVYNWRVYTCAA). The helical transmembrane segment at 27 to 47 (IASFASCMIGYDSSFIGTTLA) threads the bilayer. The Extracellular segment spans residues 48–74 (LPSFTKEFDFASYTPGALALLQSNIVS). A helical membrane pass occupies residues 75–95 (VYQAGAFFGSLFAFATSYFLG). Residues 96 to 98 (RRR) lie on the Cytoplasmic side of the membrane. The chain crosses the membrane as a helical span at residues 99-119 (SLIAFSVVFIIGAAIMLAADG). The Extracellular segment spans residues 120–131 (QRRGVDPIIAGR). A helical membrane pass occupies residues 132–152 (VLAGIGVGGASNMVPIYISEL). Residues 153-160 (APPAVRGR) lie on the Cytoplasmic side of the membrane. The helical transmembrane segment at 161–181 (LVGIYELGWQIGGLVGFWINY) threads the bilayer. Residues 182–195 (GVNTTMAPTRSQWL) are Extracellular-facing. Residue asparagine 184 is glycosylated (N-linked (GlcNAc...) asparagine). The helical transmembrane segment at 196-216 (IPFAVQLIPAGLLFLGSFWIP) threads the bilayer. Topologically, residues 217-285 (ESPRWLFANG…SLKQPKVRWR (69 aa)) are cytoplasmic. Residues 286-306 (FFLGGMLFLWQNGSGINAINY) traverse the membrane as a helical segment. At 307 to 327 (YSPTVFRSIGITGTNTGFLTT) the chain is on the extracellular side. Residues 328 to 349 (GIFGVVKMVLTIIWLLWLVDLV) traverse the membrane as a helical segment. The Cytoplasmic portion of the chain corresponds to 350–352 (GRR). A helical membrane pass occupies residues 353-373 (RILFVGATGGSLCMWFIGAYI). Residues 374 to 389 (KIAGPGTTKTEEAKLT) lie on the Extracellular side of the membrane. The chain crosses the membrane as a helical span at residues 390–410 (SGGIAAIFFFYLWTAFYTPSW). Residues 411–435 (NGTPWVINSEMFDQNTRSLGQASAA) are Cytoplasmic-facing. Residues 436–456 (ANNWFWNFIISRFTPQMFIKM) traverse the membrane as a helical segment. At 457–458 (EY) the chain is on the extracellular side. Residues 459–479 (GVYFFFASLMLLSVVFIYFFI) form a helical membrane-spanning segment. The Cytoplasmic segment spans residues 480–536 (PETKSIPLEAMDRLFAIKSVHNANKILMDELNFDRNPEREQSSLDEKDRVTQTENAV). Residues 516–530 (PEREQSSLDEKDRVT) are compositionally biased toward basic and acidic residues. The interval 516–536 (PEREQSSLDEKDRVTQTENAV) is disordered.

Belongs to the major facilitator superfamily. Sugar transporter (TC 2.A.1.1) family.

Its subcellular location is the membrane. This is Quinate permease (qa-y) from Neurospora africana.